A 509-amino-acid chain; its full sequence is Cytochrome P450 monooxygenase fumoA (509 aa).

A helical membrane pass occupies residues 5–27; it reads LANLNFPYLILSACLSAILLSRF. N-linked (GlcNAc...) asparagine glycans are attached at residues N317, N369, and N378. Residue C456 participates in heme binding. N-linked (GlcNAc...) asparagine glycosylation is present at N464.

Belongs to the cytochrome P450 family. Heme is required as a cofactor.

It localises to the membrane. It functions in the pathway secondary metabolite biosynthesis. In terms of biological role, cytochrome P450 monooxygenase; part of the gene cluster that mediates the biosynthesis of fumosorinone, a 2-pyridone alkaloid that acts as an inhibitor of protein tyrosine phosphatase 1B which is implicated asa negative regulator of insulin receptor signaling and a potential drug target for the treatment of type II diabetes and other associated metabolic syndromes. The polyketide-amino acid backbone of fumosorinone is first assembled by the PKS-NRPS hybrid fumoS. The PKS modules condense one acetyl-CoA starter unit with 7 malonyl-CoA units, programmed C-methylations occurring after the first 3 and the sixth extensions, and cycles of full reduction occurring after the first 2 extensions. Because fumoS lacks a designated enoyl reductase (ER) domain, the required activity is provided the enoyl reductase fumoC. Upon formation of the polyketide backbone on the thiotemplate, the polyketide is transferred to the NRPS module and linked to tyrosine to produce the acyltetramic acid intermediate called prefumosorinone A. The cytochrome P450 monooxygenase fumoA then probably catalyzes an unprecedented oxidative ring expansion of prefumosorinone A to form prefumosorinone B which contains the 2-pyridone core of fumosorinone. The cytochrome P450 monooxygenase fumoB might hydroxylate the nitrogen of prefumosorinone B, but not the acyltetramic acid prefumosorinone A, to form fumosorinone. The protein is Cytochrome P450 monooxygenase fumoA of Cordyceps fumosorosea (strain ARSEF 2679) (Isaria fumosorosea).